The following is a 258-amino-acid chain: Imidazole glycerol phosphate synthase subunit HisF (258 aa).

Residues Asp11 and Asp130 contribute to the active site.

This sequence belongs to the HisA/HisF family. Heterodimer of HisH and HisF.

It localises to the cytoplasm. It catalyses the reaction 5-[(5-phospho-1-deoxy-D-ribulos-1-ylimino)methylamino]-1-(5-phospho-beta-D-ribosyl)imidazole-4-carboxamide + L-glutamine = D-erythro-1-(imidazol-4-yl)glycerol 3-phosphate + 5-amino-1-(5-phospho-beta-D-ribosyl)imidazole-4-carboxamide + L-glutamate + H(+). The protein operates within amino-acid biosynthesis; L-histidine biosynthesis; L-histidine from 5-phospho-alpha-D-ribose 1-diphosphate: step 5/9. IGPS catalyzes the conversion of PRFAR and glutamine to IGP, AICAR and glutamate. The HisF subunit catalyzes the cyclization activity that produces IGP and AICAR from PRFAR using the ammonia provided by the HisH subunit. In Magnetococcus marinus (strain ATCC BAA-1437 / JCM 17883 / MC-1), this protein is Imidazole glycerol phosphate synthase subunit HisF.